We begin with the raw amino-acid sequence, 405 residues long: Acetate kinase (405 aa).

Asn7 contributes to the Mg(2+) binding site. Position 14 (Lys14) interacts with ATP. Arg98 provides a ligand contact to substrate. The active-site Proton donor/acceptor is the Asp156. Residues His215–Gly219, Asp290–Arg292, and Gly338–Asn342 each bind ATP. Glu391 is a Mg(2+) binding site.

This sequence belongs to the acetokinase family. Homodimer. Mg(2+) serves as cofactor. Mn(2+) is required as a cofactor.

The protein resides in the cytoplasm. It carries out the reaction acetate + ATP = acetyl phosphate + ADP. The protein operates within metabolic intermediate biosynthesis; acetyl-CoA biosynthesis; acetyl-CoA from acetate: step 1/2. Functionally, catalyzes the formation of acetyl phosphate from acetate and ATP. Can also catalyze the reverse reaction. In Gloeobacter violaceus (strain ATCC 29082 / PCC 7421), this protein is Acetate kinase.